A 225-amino-acid chain; its full sequence is Glutathione S-transferase Mu 5 (225 aa).

The GST N-terminal domain maps to 5-92; sequence KSMVLGYWDI…YIARKHNMCG (88 aa). At serine 6 the chain carries Phosphoserine. Glutathione is bound by residues 11–12, 50–54, 63–64, and 76–77; these read YW, WLDVK, NL, and QS. The GST C-terminal domain occupies 94–212; that stretch reads TEEEKIRVDI…QSDRCFKMPI (119 aa). Residue tyrosine 120 participates in substrate binding.

This sequence belongs to the GST superfamily. Mu family. Homodimer. The N-terminus is blocked. In terms of tissue distribution, expressed in testis and brain. Very low expression in liver, kidney, heart and lung.

It localises to the cytoplasm. It catalyses the reaction RX + glutathione = an S-substituted glutathione + a halide anion + H(+). Its function is as follows. Conjugation of reduced glutathione to a wide number of exogenous and endogenous hydrophobic electrophiles. This chain is Glutathione S-transferase Mu 5 (Gstm5), found in Rattus norvegicus (Rat).